The primary structure comprises 307 residues: Recombination-associated protein RdgC (307 aa).

The protein belongs to the RdgC family.

The protein resides in the cytoplasm. It is found in the nucleoid. Functionally, may be involved in recombination. The sequence is that of Recombination-associated protein RdgC from Burkholderia cenocepacia (strain ATCC BAA-245 / DSM 16553 / LMG 16656 / NCTC 13227 / J2315 / CF5610) (Burkholderia cepacia (strain J2315)).